The primary structure comprises 208 residues: Crossover junction endodeoxyribonuclease RuvC (208 aa).

Active-site residues include Asp-9, Glu-70, and Asp-143. Positions 9, 70, and 143 each coordinate Mg(2+).

Belongs to the RuvC family. In terms of assembly, homodimer which binds Holliday junction (HJ) DNA. The HJ becomes 2-fold symmetrical on binding to RuvC with unstacked arms; it has a different conformation from HJ DNA in complex with RuvA. In the full resolvosome a probable DNA-RuvA(4)-RuvB(12)-RuvC(2) complex forms which resolves the HJ. Mg(2+) is required as a cofactor.

It is found in the cytoplasm. The enzyme catalyses Endonucleolytic cleavage at a junction such as a reciprocal single-stranded crossover between two homologous DNA duplexes (Holliday junction).. Functionally, the RuvA-RuvB-RuvC complex processes Holliday junction (HJ) DNA during genetic recombination and DNA repair. Endonuclease that resolves HJ intermediates. Cleaves cruciform DNA by making single-stranded nicks across the HJ at symmetrical positions within the homologous arms, yielding a 5'-phosphate and a 3'-hydroxyl group; requires a central core of homology in the junction. The consensus cleavage sequence is 5'-(A/T)TT(C/G)-3'. Cleavage occurs on the 3'-side of the TT dinucleotide at the point of strand exchange. HJ branch migration catalyzed by RuvA-RuvB allows RuvC to scan DNA until it finds its consensus sequence, where it cleaves and resolves the cruciform DNA. In Leifsonia xyli subsp. xyli (strain CTCB07), this protein is Crossover junction endodeoxyribonuclease RuvC.